A 516-amino-acid polypeptide reads, in one-letter code: Bifunctional pantoate ligase/cytidylate kinase (516 aa).

Positions 1–279 (MVRKIFQTNA…CGSTRLIDHT (279 aa)) are pantoate--beta-alanine ligase. 29-36 (MGGLHPGH) contributes to the ATP binding site. Catalysis depends on histidine 36, which acts as the Proton donor. Glutamine 64 is a (R)-pantoate binding site. Beta-alanine is bound at residue glutamine 64. Residue 153–156 (GEKD) participates in ATP binding. Glutamine 159 is a (R)-pantoate binding site. 190-193 (YSSR) contributes to the ATP binding site. The interval 280 to 516 (FLMHRKPIIA…PEEVWPTPNS (237 aa)) is cytidylate kinase.

In the N-terminal section; belongs to the pantothenate synthetase family. The protein in the C-terminal section; belongs to the cytidylate kinase family. Type 1 subfamily.

Its subcellular location is the cytoplasm. The enzyme catalyses (R)-pantoate + beta-alanine + ATP = (R)-pantothenate + AMP + diphosphate + H(+). It catalyses the reaction CMP + ATP = CDP + ADP. The catalysed reaction is dCMP + ATP = dCDP + ADP. It functions in the pathway cofactor biosynthesis; (R)-pantothenate biosynthesis; (R)-pantothenate from (R)-pantoate and beta-alanine: step 1/1. Its function is as follows. Catalyzes the condensation of pantoate with beta-alanine in an ATP-dependent reaction via a pantoyl-adenylate intermediate. In terms of biological role, catalyzes the transfer of a phosphate group from ATP to either CMP or dCMP to form CDP or dCDP and ADP, respectively. The polypeptide is Bifunctional pantoate ligase/cytidylate kinase (Prochlorococcus marinus (strain NATL1A)).